A 190-amino-acid polypeptide reads, in one-letter code: Elongation factor P-like protein (190 aa).

Belongs to the elongation factor P family.

This Citrobacter koseri (strain ATCC BAA-895 / CDC 4225-83 / SGSC4696) protein is Elongation factor P-like protein.